A 256-amino-acid chain; its full sequence is Tryptophan synthase alpha chain (256 aa).

Residues glutamate 45 and aspartate 56 each act as proton acceptor in the active site.

It belongs to the TrpA family. As to quaternary structure, tetramer of two alpha and two beta chains.

It catalyses the reaction (1S,2R)-1-C-(indol-3-yl)glycerol 3-phosphate + L-serine = D-glyceraldehyde 3-phosphate + L-tryptophan + H2O. It functions in the pathway amino-acid biosynthesis; L-tryptophan biosynthesis; L-tryptophan from chorismate: step 5/5. Its function is as follows. The alpha subunit is responsible for the aldol cleavage of indoleglycerol phosphate to indole and glyceraldehyde 3-phosphate. This is Tryptophan synthase alpha chain from Christiangramia forsetii (strain DSM 17595 / CGMCC 1.15422 / KT0803) (Gramella forsetii).